Consider the following 183-residue polypeptide: Putative manganese efflux pump MntP 1 (183 aa).

6 consecutive transmembrane segments (helical) span residues 6-26, 36-56, 64-84, 100-120, 130-150, and 158-178; these read LFLLALAISLDAFGVILCIGI, MIFVFSFGFFQFFLSFLGGYI, IVPIPTIVGGLIIIIVGILMI, IMYLILGVSVSIDALVIGFTT, LFMSSLFMGLIATIICSLGII, and ISIISSYADYIGGIILILFGL.

The protein belongs to the MntP (TC 9.B.29) family.

It localises to the cell membrane. Functionally, probably functions as a manganese efflux pump. The protein is Putative manganese efflux pump MntP 1 of Clostridium botulinum (strain Hall / ATCC 3502 / NCTC 13319 / Type A).